The following is a 57-amino-acid chain: uncharacterized protein (57 aa).

Residues 15 to 37 (GLAGLICIGLTISSGFSGSSILI) traverse the membrane as a helical segment.

It is found in the membrane. This is an uncharacterized protein from Dictyostelium discoideum (Social amoeba).